We begin with the raw amino-acid sequence, 261 residues long: 5'-nucleotidase SurE (261 aa).

A divalent metal cation-binding residues include D8, D9, S43, and N96.

It belongs to the SurE nucleotidase family. The cofactor is a divalent metal cation.

It is found in the cytoplasm. The catalysed reaction is a ribonucleoside 5'-phosphate + H2O = a ribonucleoside + phosphate. In terms of biological role, nucleotidase that shows phosphatase activity on nucleoside 5'-monophosphates. This chain is 5'-nucleotidase SurE, found in Cereibacter sphaeroides (strain ATCC 17029 / ATH 2.4.9) (Rhodobacter sphaeroides).